The following is a 155-amino-acid chain: D-aminoacyl-tRNA deacylase (155 aa).

Positions 137–138 (GP) match the Gly-cisPro motif, important for rejection of L-amino acids motif.

Belongs to the DTD family. As to quaternary structure, homodimer.

The protein localises to the cytoplasm. It carries out the reaction glycyl-tRNA(Ala) + H2O = tRNA(Ala) + glycine + H(+). The catalysed reaction is a D-aminoacyl-tRNA + H2O = a tRNA + a D-alpha-amino acid + H(+). In terms of biological role, an aminoacyl-tRNA editing enzyme that deacylates mischarged D-aminoacyl-tRNAs. Also deacylates mischarged glycyl-tRNA(Ala), protecting cells against glycine mischarging by AlaRS. Acts via tRNA-based rather than protein-based catalysis; rejects L-amino acids rather than detecting D-amino acids in the active site. By recycling D-aminoacyl-tRNA to D-amino acids and free tRNA molecules, this enzyme counteracts the toxicity associated with the formation of D-aminoacyl-tRNA entities in vivo and helps enforce protein L-homochirality. This Roseiflexus sp. (strain RS-1) protein is D-aminoacyl-tRNA deacylase.